The sequence spans 480 residues: Sialyltransferase-like protein 5 (480 aa).

Topologically, residues 1–17 are cytoplasmic; sequence MARAPPPLSSLPPPPRR. A signal-anchor for type II membrane protein transmembrane segment spans residues 18-38; sequence PTVVLLLGLALAFCLAVLSIQ. The Lumenal segment spans residues 39-480; sequence SSFFTAPRLA…VCVRHERSSS (442 aa). 4 N-linked (GlcNAc...) asparagine glycosylation sites follow: N98, N130, N165, and N321.

It belongs to the glycosyltransferase 29 family.

The protein resides in the golgi apparatus membrane. Functionally, may possess sialyltransferase-like activity in vitro. This Oryza sativa subsp. japonica (Rice) protein is Sialyltransferase-like protein 5.